The sequence spans 441 residues: Gluconate 2-dehydrogenase cytochrome c subunit (441 aa).

A signal peptide spans 1–19; the sequence is MMKSILALVLGTLSFAALA. Cytochrome c domains are found at residues 26-129, 173-289, and 312-403; these read ALVK…MHGV, PVLA…KSLG, and DDSQ…RGSW. Positions 40, 43, 44, 188, 191, 192, 325, 328, and 329 each coordinate heme c.

As to quaternary structure, heterotrimer. Requires FAD as cofactor. Post-translationally, binds 3 heme c groupd covalently per subunit.

It localises to the cell membrane. It carries out the reaction D-gluconate + A = 2-dehydro-D-gluconate + AH2. In terms of biological role, part of the heterotrimer that catalyzes the conversion of D-gluconate to 2-dehydro-D-gluconate. This is Gluconate 2-dehydrogenase cytochrome c subunit from Pantoea cypripedii (Pectobacterium cypripedii).